The chain runs to 321 residues: Glutaminase (321 aa).

Residues Ser-69, Asn-120, Glu-165, Asn-172, Tyr-196, Tyr-248, and Val-266 each coordinate substrate.

This sequence belongs to the glutaminase family. In terms of assembly, homotetramer.

It carries out the reaction L-glutamine + H2O = L-glutamate + NH4(+). In Bacteroides thetaiotaomicron (strain ATCC 29148 / DSM 2079 / JCM 5827 / CCUG 10774 / NCTC 10582 / VPI-5482 / E50), this protein is Glutaminase.